Reading from the N-terminus, the 485-residue chain is GTPase Obg (485 aa).

In terms of domain architecture, Obg spans 2–159 (PRFVDRVVIH…RDLTLELKTV (158 aa)). Positions 160–341 (ADVGLIGFPS…LIFALWEMVK (182 aa)) constitute an OBG-type G domain. GTP-binding positions include 166–173 (GFPSAGKS), 191–195 (FTTLV), 212–215 (DVPG), 292–295 (NKID), and 322–324 (STV). 2 residues coordinate Mg(2+): Ser-173 and Thr-193. The 79-residue stretch at 359–437 (PIPVDESGFT…IGDVTFDWEP (79 aa)) folds into the OCT domain. Residues 450–485 (RGTDIRLEQTDRVGAAERKAARRERRQPGESGGEDS) form a disordered region. The segment covering 452–468 (TDIRLEQTDRVGAAERK) has biased composition (basic and acidic residues).

It belongs to the TRAFAC class OBG-HflX-like GTPase superfamily. OBG GTPase family. As to quaternary structure, monomer. Requires Mg(2+) as cofactor.

The protein resides in the cytoplasm. Functionally, an essential GTPase which binds GTP, GDP and possibly (p)ppGpp with moderate affinity, with high nucleotide exchange rates and a fairly low GTP hydrolysis rate. Plays a role in control of the cell cycle, stress response, ribosome biogenesis and in those bacteria that undergo differentiation, in morphogenesis control. The protein is GTPase Obg of Mycolicibacterium smegmatis (strain ATCC 700084 / mc(2)155) (Mycobacterium smegmatis).